A 349-amino-acid chain; its full sequence is UDP-3-O-acylglucosamine N-acyltransferase (349 aa).

The Proton acceptor role is filled by H248.

The protein belongs to the transferase hexapeptide repeat family. LpxD subfamily. In terms of assembly, homotrimer.

It carries out the reaction a UDP-3-O-[(3R)-3-hydroxyacyl]-alpha-D-glucosamine + a (3R)-hydroxyacyl-[ACP] = a UDP-2-N,3-O-bis[(3R)-3-hydroxyacyl]-alpha-D-glucosamine + holo-[ACP] + H(+). It functions in the pathway bacterial outer membrane biogenesis; LPS lipid A biosynthesis. In terms of biological role, catalyzes the N-acylation of UDP-3-O-acylglucosamine using 3-hydroxyacyl-ACP as the acyl donor. Is involved in the biosynthesis of lipid A, a phosphorylated glycolipid that anchors the lipopolysaccharide to the outer membrane of the cell. The sequence is that of UDP-3-O-acylglucosamine N-acyltransferase from Colwellia psychrerythraea (strain 34H / ATCC BAA-681) (Vibrio psychroerythus).